A 37-amino-acid chain; its full sequence is Delta/kappa-conotoxin Mo3964 (37 aa).

3 disulfide bridges follow: cysteine 4–cysteine 12, cysteine 11–cysteine 27, and cysteine 21–cysteine 34.

Expressed by the venom duct.

It localises to the secreted. Functionally, this toxin reduces the outward currents that are due to the opening of voltage-gated potassium channels in DRG neurons. In addition, leftward shift in the presence of this toxin is observed in averaged normalized conductance-voltage plot of outward sodium currents (Nav1.2/SCN2A). This chain is Delta/kappa-conotoxin Mo3964, found in Conus monile (Necklace cone).